Reading from the N-terminus, the 403-residue chain is Chalcone synthase 2 (403 aa).

Residue 59 to 66 (RFQRMCES) participates in CoA binding. Catalysis depends on Cys168, which acts as the Acyl-thioester intermediate. A substrate-binding site is contributed by 220 to 221 (GD). CoA is bound at residue Ala313.

The protein belongs to the thiolase-like superfamily. Chalcone/stilbene synthases family. As to quaternary structure, homodimer.

The enzyme catalyses (E)-4-coumaroyl-CoA + 3 malonyl-CoA + 3 H(+) = 2',4,4',6'-tetrahydroxychalcone + 3 CO2 + 4 CoA. The protein operates within secondary metabolite biosynthesis; flavonoid biosynthesis. Functionally, the primary product of this enzyme is 4,2',4',6'-tetrahydroxychalcone (also termed naringenin-chalcone or chalcone) which can under specific conditions spontaneously isomerize into naringenin. In Oryza sativa subsp. japonica (Rice), this protein is Chalcone synthase 2 (CHS2).